The following is a 1544-amino-acid chain: Protein mahjong (1544 aa).

Residues 1-110 (MSEGSGSENA…AAADRRQATK (110 aa)) are disordered. Residues 10-35 (AAAAEAAAEAEAATEAALMAEAVAVA) are compositionally biased toward low complexity. Over residues 38–91 (SDEEEQPEAEDMPEQAGDNQEEDAAEQQDGGEPEADEDADADDAMSVENAENES) the composition is skewed to acidic residues. Ser-565 and Ser-569 each carry phosphoserine. The region spanning 912-944 (NKQQLYQLIFEHLESNGLSQTAQMLQREVGLPL) is the LisH domain. 2 disordered regions span residues 946–973 (TPTT…SRNR) and 987–1059 (GNGD…LAED). Residue Ser-955 is modified to Phosphoserine. Positions 961–971 (SLPSGSSSLSR) are enriched in low complexity. Positions 1016–1027 (PNFSSLNTTQTP) are enriched in polar residues. 2 consecutive short sequence motifs (DWD box) follow at residues 1302 to 1309 (VLWDVRSG) and 1338 to 1345 (EVWDLRTF). 2 disordered regions span residues 1447–1475 (KSER…ENTF) and 1487–1544 (LRNL…SSDD). Acidic residues-rich tracts occupy residues 1451–1467 (SEEE…EDGS) and 1495–1535 (NDDE…DVLE).

The protein belongs to the VPRBP/DCAF1 family. As to quaternary structure, component of the CUL4-RBX1-DDB1-DCAF1 E3 ubiquitin-protein ligase complex. Interacts with l(2)gl.

The protein resides in the nucleus. It functions in the pathway protein modification; protein ubiquitination. Functionally, probable substrate recognition component of tsome E3 ubiquitin-protein ligase complex. Plays a key role in cell competition via its interaction with l(2)gl. In Drosophila melanogaster (Fruit fly), this protein is Protein mahjong (mahj).